A 593-amino-acid chain; its full sequence is Aspartate--tRNA ligase (593 aa).

Residue Glu-180 coordinates L-aspartate. The tract at residues 204–207 (QIFK) is aspartate. An L-aspartate-binding site is contributed by Arg-226. ATP is bound by residues 226–228 (RDE) and Gln-235. His-453 lines the L-aspartate pocket. Glu-487 contacts ATP. Residue Arg-494 coordinates L-aspartate. Residue 539–542 (GLDR) participates in ATP binding.

Belongs to the class-II aminoacyl-tRNA synthetase family. Type 1 subfamily. Homodimer.

The protein resides in the cytoplasm. It catalyses the reaction tRNA(Asp) + L-aspartate + ATP = L-aspartyl-tRNA(Asp) + AMP + diphosphate. Functionally, catalyzes the attachment of L-aspartate to tRNA(Asp) in a two-step reaction: L-aspartate is first activated by ATP to form Asp-AMP and then transferred to the acceptor end of tRNA(Asp). This chain is Aspartate--tRNA ligase, found in Clostridium botulinum (strain Loch Maree / Type A3).